The primary structure comprises 614 residues: Dihydroxy-acid dehydratase (614 aa).

Asp-81 is a binding site for Mg(2+). Cys-122 provides a ligand contact to [2Fe-2S] cluster. The Mg(2+) site is built by Asp-123 and Lys-124. Lys-124 carries the post-translational modification N6-carboxylysine. Cys-195 serves as a coordination point for [2Fe-2S] cluster. Glu-491 contributes to the Mg(2+) binding site. Ser-517 (proton acceptor) is an active-site residue.

It belongs to the IlvD/Edd family. As to quaternary structure, homodimer. [2Fe-2S] cluster is required as a cofactor. Requires Mg(2+) as cofactor.

The enzyme catalyses (2R)-2,3-dihydroxy-3-methylbutanoate = 3-methyl-2-oxobutanoate + H2O. It catalyses the reaction (2R,3R)-2,3-dihydroxy-3-methylpentanoate = (S)-3-methyl-2-oxopentanoate + H2O. It participates in amino-acid biosynthesis; L-isoleucine biosynthesis; L-isoleucine from 2-oxobutanoate: step 3/4. Its pathway is amino-acid biosynthesis; L-valine biosynthesis; L-valine from pyruvate: step 3/4. Its function is as follows. Functions in the biosynthesis of branched-chain amino acids. Catalyzes the dehydration of (2R,3R)-2,3-dihydroxy-3-methylpentanoate (2,3-dihydroxy-3-methylvalerate) into 2-oxo-3-methylpentanoate (2-oxo-3-methylvalerate) and of (2R)-2,3-dihydroxy-3-methylbutanoate (2,3-dihydroxyisovalerate) into 2-oxo-3-methylbutanoate (2-oxoisovalerate), the penultimate precursor to L-isoleucine and L-valine, respectively. The chain is Dihydroxy-acid dehydratase from Rhodopseudomonas palustris (strain BisA53).